We begin with the raw amino-acid sequence, 228 residues long: Glycosylphosphatidylinositol-anchored high density lipoprotein-binding protein 1 (228 aa).

The signal sequence occupies residues 1 to 22 (MKALRAVLLILLLSGQPGSGWA). The segment at 21-32 (WAQEDGDADPEP) is disordered. The segment at 24–48 (EDGDADPEPENYNYDDDDDEEEEEE) is important for LPL transport to the lumenal surface of endothelial cells. The segment covering 24 to 49 (EDGDADPEPENYNYDDDDDEEEEEET) has biased composition (acidic residues). A Sulfotyrosine modification is found at Tyr35. In terms of domain architecture, UPAR/Ly6 spans 61 to 148 (LQCYFCQVLH…PWQNPQVQNP (88 aa)). Cystine bridges form between Cys63–Cys88, Cys66–Cys75, Cys81–Cys109, Cys113–Cys129, and Cys130–Cys135. Asn76 carries an N-linked (GlcNAc...) asparagine glycan. The interval 102 to 108 (LTTYSMW) is important for interaction with LPL. Positions 145 to 200 (VQNPLGGRADSPLESGTRHPQGGKFSHPQVVKAAHPQSDGANLPKSGKANQPQGSG) are disordered. Residue Gly198 is the site of GPI-anchor amidated glycine attachment. A propeptide spans 199–228 (SGAGYPSGWTKFGNIALLLSFFTCLWASGA) (removed in mature form).

As to quaternary structure, mostly monomer, but also homodimer and homooligomer. Interacts with lipoprotein lipase (LPL). Interacts with high affinity with high-density lipoprotein (HDL). Interacts with chylomicrons. Interacts with APOA5. Post-translationally, glycosylation of Asn-76 is critical for cell surface localization. Sulfation of a Tyr in the N-terminal acidic region increases the affinity for LPL. As to expression, detected in fat tissue. Detected on the luminal surface of capillary endothelial cells in heart, skeletal muscle and brown adipose tissue (at protein level). Detected in heart and brown adipose tissue. Expressed at lower levels in lung and liver.

It localises to the apical cell membrane. The protein localises to the basolateral cell membrane. The protein resides in the cell membrane. Functionally, mediates the transport of lipoprotein lipase LPL from the basolateral to the apical surface of endothelial cells in capillaries. Anchors LPL on the surface of endothelial cells in the lumen of blood capillaries. Thereby, plays an important role in lipolytic processing of chylomicrons by LPL, triglyceride metabolism and lipid homeostasis. Binds chylomicrons and phospholipid particles that contain APOA5. Binds high-density lipoprotein (HDL) and plays a role in the uptake of lipids from HDL. This chain is Glycosylphosphatidylinositol-anchored high density lipoprotein-binding protein 1, found in Mus musculus (Mouse).